The chain runs to 970 residues: uncharacterized protein (970 aa).

A helical transmembrane segment spans residues 12–32 (VIFFSVFFVIFFLFIESSVGF).

It to E.coli YtfN.

It is found in the membrane. This is an uncharacterized protein from Buchnera aphidicola subsp. Acyrthosiphon pisum (strain APS) (Acyrthosiphon pisum symbiotic bacterium).